A 203-amino-acid chain; its full sequence is FMN-dependent NADH:quinone oxidoreductase 5 (203 aa).

FMN is bound by residues Ser-9, 15 to 17 (SAS), 95 to 98 (MYNF), and 139 to 142 (TSGG).

It belongs to the azoreductase type 1 family. In terms of assembly, homodimer. FMN is required as a cofactor.

It carries out the reaction 2 a quinone + NADH + H(+) = 2 a 1,4-benzosemiquinone + NAD(+). It catalyses the reaction N,N-dimethyl-1,4-phenylenediamine + anthranilate + 2 NAD(+) = 2-(4-dimethylaminophenyl)diazenylbenzoate + 2 NADH + 2 H(+). Quinone reductase that provides resistance to thiol-specific stress caused by electrophilic quinones. Its function is as follows. Also exhibits azoreductase activity. Catalyzes the reductive cleavage of the azo bond in aromatic azo compounds to the corresponding amines. In Pseudomonas fluorescens (strain ATCC BAA-477 / NRRL B-23932 / Pf-5), this protein is FMN-dependent NADH:quinone oxidoreductase 5.